Reading from the N-terminus, the 207-residue chain is Thymidylate kinase (207 aa).

7-14 (GCEGSGKS) lines the ATP pocket.

Belongs to the thymidylate kinase family.

The catalysed reaction is dTMP + ATP = dTDP + ADP. Functionally, phosphorylation of dTMP to form dTDP in both de novo and salvage pathways of dTTP synthesis. This Chlamydia caviae (strain ATCC VR-813 / DSM 19441 / 03DC25 / GPIC) (Chlamydophila caviae) protein is Thymidylate kinase.